A 1212-amino-acid polypeptide reads, in one-letter code: MGKIKKILRKGPPATKRPPKAARTESADSALGLDAHSDLEKPATSSDDGFEEPTPKPKPSKKTTTLPGPVSIIAQKKNKFRTDDAKNVKPPTLEEMKELRDTRNLFHSNLFKLQVKEMLEELQLKTKYTEYIDNWMESFTVFTQRLKDGLVEKSQLEVPLNVDKKISGFIFSKPTKEPQLIGAASTGTLLGPKIVVDVALEMPKDCLHKDDYLNLIYDQKRALYLTYVTNQMRSDPAYSQDKFAFNYHGNNPLKPVLELTPAAKQVSKHLQLRLFITAPQSTFKPSRFVPWNNNIRPTYYNDEWDEEEALPSTQHYNASVLFDLTLAQNQALLDKAFKGRRNFQDGLLLLKVWLRQRELDRGFTGFGSHILASFIVYLNQQRILHQSSSSYQVARTVWNQLANTDWTNGITLAPASGQTEQLSTMAGYYDVCFMDVSGQLNLCANVPLGVYQRVRAEAKLAVDLLNDMKLNSFPYIFMQKCPLYTRVDNILKITNYSSIQQMLVLHSKPQMKYDFASYGYPQLLQILTELLQKGLKQRVQAILPIETVSSAWPVESKAPIIGQAIQLGLILDPEHAYEVLDKGPSSNDDPEGSAEFRKFWGEKSNLRRFQDGSITEAVVWGTTKDAPSKKRLIVRQIVMHLLEHHLQLDSKDIQYIAAELDLVYQLSPWFKVSKVKTKLELQQDTDAEALSPNVIRCYDDLARQLHALDDLPLEIVSISSISPVSRYCEPMPVLPQARMMADHIHASHIQRVIIQLGQSGKWPNELSALRALKTAFLIEIGEKLKAQCRLNWSITSEGLLVLKRGFCFLLELAHNKELALLKQEVTERGVTKYVDNPESRALEQRHYILPKVSGALHSLHQSHSAYGPTVLIAKRWLATQLLDDGIWPPMATELLVAHLYQQRNAPQAIAAPQTGFIRFLHLLAHSDWNGELFLLNFNSSWQEQQIGDLEHSFRSDRQSYPPLALATSYDQQHAGRLWTTGESPSLRILSHVSRLARHALEMIETSLQSKDLRFVRPAQLFRGSSEGYDLVIQLKSDLVPNALSYDLGSPFVSFDQPNYLLPRAGKDPLAAIVHQLRSAYSDYAAFFYNPHGGKELAIMWRPPAVFAPKAFKVTELQACTLCDKGKVQVVRETLVEDFKVLLKDFYLRISTPEELKREQREHQNPKRYFNAKPQDNESCSKSKKRKLAKAAKVQAPLKRKSLIKSRPLKSLS.

2 disordered regions span residues 1-72 and 1156-1212; these read MGKI…PVSI and KREQ…KSLS. A compositionally biased stretch (basic residues) spans 1197-1212; the sequence is LKRKSLIKSRPLKSLS.

Belongs to the NRAP family. In terms of assembly, part of the small subunit (SSU) processome, composed of more than 70 proteins and the RNA chaperone small nucleolar RNA (snoRNA) U3.

It is found in the nucleus. It localises to the nucleolus. The protein resides in the chromosome. In terms of biological role, part of the small subunit (SSU) processome, first precursor of the small eukaryotic ribosomal subunit. During the assembly of the SSU processome in the nucleolus, many ribosome biogenesis factors, an RNA chaperone and ribosomal proteins associate with the nascent pre-rRNA and work in concert to generate RNA folding, modifications, rearrangements and cleavage as well as targeted degradation of pre-ribosomal RNA by the RNA exosome. The chain is Nucleolar protein 6 from Drosophila pseudoobscura pseudoobscura (Fruit fly).